We begin with the raw amino-acid sequence, 272 residues long: Ribosomal RNA small subunit methyltransferase A (272 aa).

S-adenosyl-L-methionine is bound by residues Asn-15, Ile-17, Gly-42, Glu-64, Asp-90, and Asn-109.

Belongs to the class I-like SAM-binding methyltransferase superfamily. rRNA adenine N(6)-methyltransferase family. RsmA subfamily.

The protein resides in the cytoplasm. It carries out the reaction adenosine(1518)/adenosine(1519) in 16S rRNA + 4 S-adenosyl-L-methionine = N(6)-dimethyladenosine(1518)/N(6)-dimethyladenosine(1519) in 16S rRNA + 4 S-adenosyl-L-homocysteine + 4 H(+). Its function is as follows. Specifically dimethylates two adjacent adenosines (A1518 and A1519) in the loop of a conserved hairpin near the 3'-end of 16S rRNA in the 30S particle. May play a critical role in biogenesis of 30S subunits. This chain is Ribosomal RNA small subunit methyltransferase A, found in Wolbachia sp. subsp. Drosophila simulans (strain wRi).